The chain runs to 320 residues: Protein U25 (320 aa).

This sequence belongs to the herpesviridae US22 family.

This is Protein U25 (U25) from Human herpesvirus 7 (strain JI) (HHV-7).